The primary structure comprises 486 residues: Cardiolipin synthase A (486 aa).

A run of 2 helical transmembrane segments spans residues 3–23 and 38–58; these read TFYT…IAGV and MAWL…YLSV. 2 PLD phosphodiesterase domains span residues 219–246 and 399–426; these read MDLR…VDPR and EGGL…DMRS. Residues histidine 224, lysine 226, aspartate 231, histidine 404, lysine 406, and aspartate 411 contribute to the active site.

The protein belongs to the phospholipase D family. Cardiolipin synthase subfamily. ClsA sub-subfamily.

The protein resides in the cell inner membrane. It catalyses the reaction 2 a 1,2-diacyl-sn-glycero-3-phospho-(1'-sn-glycerol) = a cardiolipin + glycerol. Its function is as follows. Catalyzes the reversible phosphatidyl group transfer from one phosphatidylglycerol molecule to another to form cardiolipin (CL) (diphosphatidylglycerol) and glycerol. This is Cardiolipin synthase A from Cronobacter sakazakii (strain ATCC BAA-894) (Enterobacter sakazakii).